A 359-amino-acid polypeptide reads, in one-letter code: tRNA/tmRNA (uracil-C(5))-methyltransferase (359 aa).

Gln183, Tyr211, Asn216, Glu232, and Asp292 together coordinate S-adenosyl-L-methionine. Cys317 acts as the Nucleophile in catalysis. Residue Glu351 is the Proton acceptor of the active site.

It belongs to the class I-like SAM-binding methyltransferase superfamily. RNA M5U methyltransferase family. TrmA subfamily.

It carries out the reaction uridine(54) in tRNA + S-adenosyl-L-methionine = 5-methyluridine(54) in tRNA + S-adenosyl-L-homocysteine + H(+). The enzyme catalyses uridine(341) in tmRNA + S-adenosyl-L-methionine = 5-methyluridine(341) in tmRNA + S-adenosyl-L-homocysteine + H(+). Its function is as follows. Dual-specificity methyltransferase that catalyzes the formation of 5-methyluridine at position 54 (m5U54) in all tRNAs, and that of position 341 (m5U341) in tmRNA (transfer-mRNA). This is tRNA/tmRNA (uracil-C(5))-methyltransferase from Pseudomonas fluorescens (strain SBW25).